We begin with the raw amino-acid sequence, 592 residues long: Probable tubulin polyglutamylase TTLL2 (592 aa).

2 disordered regions span residues 1–23 and 51–77; these read MRGR…TTTP and GVSI…MAED. Over residues 7–23 the composition is skewed to polar residues; sequence CSSTQSQALGSLRTTTP. One can recognise a TTL domain in the interval 84-427; that stretch reads LKPLVFRVDE…NGLRNEGREA (344 aa). Residues Lys212, 218–219, 240–243, and 253–255 contribute to the ATP site; these read RG, QKYI, and KCD. A protein is bound at residue Arg218. Residue Arg279 participates in L-glutamate binding. 298–299 contacts ATP; it reads TN. Residues Ser301 and Lys321 each contribute to the L-glutamate site. The Mg(2+) site is built by Asp373, Glu386, and Asn388. An L-glutamate-binding site is contributed by Lys404.

Belongs to the tubulin--tyrosine ligase family. It depends on Mg(2+) as a cofactor. Testis.

In terms of biological role, probable tubulin polyglutamylase that generates side chains of glutamate on the gamma-carboxyl group of specific glutamate residues within the C-terminal tail of target proteins. Similar to TTLL1, may acquire enzymatic activity only in complex with other proteins as it is most likely lacking domains important for autonomous activity. Probably involved in the side-chain initiation step of the polyglutamylation reaction rather than the elongation step. This Homo sapiens (Human) protein is Probable tubulin polyglutamylase TTLL2.